Here is a 335-residue protein sequence, read N- to C-terminus: UPF0353 protein BCG_1543 (335 aa).

Transmembrane regions (helical) follow at residues 18–38 (WFFLFLFVVAGLVALYILMQL) and 67–87 (VPAILLVLSLLLFTIAMAGPT). A VWFA domain is found at 98–294 (VVMLVIDVSQ…AELRAVYSSL (197 aa)). Residues 309 to 329 (VGWLRLGALALALAALAALLI) traverse the membrane as a helical segment.

The protein belongs to the UPF0353 family.

The protein resides in the cell membrane. The polypeptide is UPF0353 protein BCG_1543 (Mycobacterium bovis (strain BCG / Pasteur 1173P2)).